A 352-amino-acid chain; its full sequence is Adenosine deaminase (352 aa).

Residues H24 and H26 each contribute to the Zn(2+) site. 3 residues coordinate substrate: H26, D28, and G181. H208 lines the Zn(2+) pocket. E211 serves as the catalytic Proton donor. D290 lines the Zn(2+) pocket.

Belongs to the metallo-dependent hydrolases superfamily. Adenosine and AMP deaminases family. Adenosine deaminase subfamily. The cofactor is Zn(2+).

It catalyses the reaction adenosine + H2O + H(+) = inosine + NH4(+). The enzyme catalyses 2'-deoxyadenosine + H2O + H(+) = 2'-deoxyinosine + NH4(+). Its function is as follows. Catalyzes the hydrolytic deamination of adenosine and 2-deoxyadenosine. The sequence is that of Adenosine deaminase from Lactococcus lactis subsp. lactis (strain IL1403) (Streptococcus lactis).